The chain runs to 328 residues: Malate dehydrogenase (328 aa).

Residue 12-18 (GAAGQIG) participates in NAD(+) binding. R93 and R99 together coordinate substrate. Residues N106, Q113, and 130–132 (VGN) contribute to the NAD(+) site. Residues N132 and R163 each contribute to the substrate site. H188 serves as the catalytic Proton acceptor.

The protein belongs to the LDH/MDH superfamily. MDH type 2 family.

The enzyme catalyses (S)-malate + NAD(+) = oxaloacetate + NADH + H(+). Its function is as follows. Catalyzes the reversible oxidation of malate to oxaloacetate. The protein is Malate dehydrogenase of Saccharopolyspora erythraea (strain ATCC 11635 / DSM 40517 / JCM 4748 / NBRC 13426 / NCIMB 8594 / NRRL 2338).